The primary structure comprises 359 residues: Mitochondrial calcium uniporter regulator 1 (359 aa).

At 1–68 (MDCGSVGGQR…ARGGVSRASP (68 aa)) the chain is on the mitochondrial intermembrane side. Residues 69-85 (LLLLLLVPSPRLAAAAP) traverse the membrane as a helical segment. At 86–338 (RRQLGDWERS…LESHKLDNIK (253 aa)) the chain is on the mitochondrial matrix side. Positions 235 to 310 (EKSEFSALRA…VALHAQQDRA (76 aa)) form a coiled coil. A helical membrane pass occupies residues 339 to 358 (YLAGSIFTCLTVALGFYRLW). Ile-359 is a topological domain (mitochondrial intermembrane).

It belongs to the CCDC90 family. Interacts (via coiled coil regions) with MCU; the interaction is direct. Interacts with SMDT1/EMRE; the interaction is direct. Interacts with PPIF. In terms of tissue distribution, ubiquitously expressed.

The protein resides in the mitochondrion inner membrane. Its function is as follows. Key regulator of mitochondrial calcium uniporter (MCU) required for calcium entry into mitochondrion. Plays a direct role in uniporter-mediated calcium uptake via a direct interaction with MCU. Probably involved in the assembly of the membrane components of the uniporter complex (uniplex). This chain is Mitochondrial calcium uniporter regulator 1, found in Homo sapiens (Human).